The chain runs to 200 residues: Imidazole glycerol phosphate synthase subunit HisH (200 aa).

The region spanning 3-200 (DVALIDAGGA…LHNFLEMSFP (198 aa)) is the Glutamine amidotransferase type-1 domain. The Nucleophile role is filled by C78. Catalysis depends on residues H179 and E181.

Heterodimer of HisH and HisF.

It is found in the cytoplasm. The enzyme catalyses 5-[(5-phospho-1-deoxy-D-ribulos-1-ylimino)methylamino]-1-(5-phospho-beta-D-ribosyl)imidazole-4-carboxamide + L-glutamine = D-erythro-1-(imidazol-4-yl)glycerol 3-phosphate + 5-amino-1-(5-phospho-beta-D-ribosyl)imidazole-4-carboxamide + L-glutamate + H(+). It carries out the reaction L-glutamine + H2O = L-glutamate + NH4(+). It functions in the pathway amino-acid biosynthesis; L-histidine biosynthesis; L-histidine from 5-phospho-alpha-D-ribose 1-diphosphate: step 5/9. Functionally, IGPS catalyzes the conversion of PRFAR and glutamine to IGP, AICAR and glutamate. The HisH subunit catalyzes the hydrolysis of glutamine to glutamate and ammonia as part of the synthesis of IGP and AICAR. The resulting ammonia molecule is channeled to the active site of HisF. The protein is Imidazole glycerol phosphate synthase subunit HisH of Xanthomonas oryzae pv. oryzae (strain MAFF 311018).